The sequence spans 311 residues: Malate dehydrogenase (311 aa).

Residues 7–13 (GAAGGIG) and D34 each bind NAD(+). The substrate site is built by R81 and R87. NAD(+) contacts are provided by residues N94 and 117 to 119 (ITN). Positions 119 and 153 each coordinate substrate. Catalysis depends on H177, which acts as the Proton acceptor. Position 227 (M227) interacts with NAD(+).

Belongs to the LDH/MDH superfamily. MDH type 1 family. Homodimer.

The enzyme catalyses (S)-malate + NAD(+) = oxaloacetate + NADH + H(+). Functionally, catalyzes the reversible oxidation of malate to oxaloacetate. The chain is Malate dehydrogenase from Histophilus somni (strain 129Pt) (Haemophilus somnus).